The following is a 248-amino-acid chain: Myelin protein P0 (248 aa).

The first 29 residues, Met1–Ala29, serve as a signal peptide directing secretion. Residues Ile30–Thr143 enclose the Ig-like V-type domain. Topologically, residues Ile30 to Arg153 are extracellular. A disulfide bond links Cys50 and Cys127. Asn122 carries N-linked (GlcNAc...) (complex) asparagine glycosylation. A helical transmembrane segment spans residues Tyr154–Val179. Residues Arg180 to Lys248 are Cytoplasmic-facing. A Phosphoserine; by PKC modification is found at Ser210. Residues Met222 to Lys248 are disordered. Over residues Asp224–Lys248 the composition is skewed to basic and acidic residues. Residues Ser226 and Ser228 each carry the phosphoserine modification. 2 positions are modified to phosphoserine; by PKC: Ser233 and Ser243.

It belongs to the myelin P0 protein family. As to quaternary structure, homodimer and homotetramer. In terms of processing, N-glycosylated; contains sulfate-substituted glycan.

Its subcellular location is the cell membrane. Is an adhesion molecule necessary for normal myelination in the peripheral nervous system. It mediates adhesion between adjacent myelin wraps and ultimately drives myelin compaction. This is Myelin protein P0 (MPZ) from Equus caballus (Horse).